A 557-amino-acid polypeptide reads, in one-letter code: Potassium-transporting ATPase potassium-binding subunit (557 aa).

12 helical membrane-spanning segments follow: residues 5–25 (GFLL…PLGS), 63–83 (LCAI…MLLG), 132–152 (GLTV…FALI), 170–190 (LLRI…LFFI), 253–273 (FVQM…FGEV), 283–303 (LLWA…WAEV), 329–349 (VLVS…AVIA), 356–376 (ALGG…FGGV), 379–399 (GLYG…LMIG), 416–436 (LTAL…ALAM), 484–504 (LLAF…MAIA), and 526–546 (LFVG…FIPA).

Belongs to the KdpA family. As to quaternary structure, the system is composed of three essential subunits: KdpA, KdpB and KdpC.

It is found in the cell inner membrane. Functionally, part of the high-affinity ATP-driven potassium transport (or Kdp) system, which catalyzes the hydrolysis of ATP coupled with the electrogenic transport of potassium into the cytoplasm. This subunit binds the periplasmic potassium ions and delivers the ions to the membrane domain of KdpB through an intramembrane tunnel. The chain is Potassium-transporting ATPase potassium-binding subunit from Escherichia coli O139:H28 (strain E24377A / ETEC).